The primary structure comprises 334 residues: N-acetyl-gamma-glutamyl-phosphate reductase (334 aa).

Residue Cys-154 is part of the active site.

Belongs to the NAGSA dehydrogenase family. Type 1 subfamily.

It is found in the cytoplasm. The catalysed reaction is N-acetyl-L-glutamate 5-semialdehyde + phosphate + NADP(+) = N-acetyl-L-glutamyl 5-phosphate + NADPH + H(+). It functions in the pathway amino-acid biosynthesis; L-arginine biosynthesis; N(2)-acetyl-L-ornithine from L-glutamate: step 3/4. In terms of biological role, catalyzes the NADPH-dependent reduction of N-acetyl-5-glutamyl phosphate to yield N-acetyl-L-glutamate 5-semialdehyde. This Yersinia pestis protein is N-acetyl-gamma-glutamyl-phosphate reductase.